The following is a 523-amino-acid chain: Probable 3-ketoacyl-CoA synthase 20 (523 aa).

2 consecutive transmembrane segments (helical) span residues 31-55 (IVAV…AAGG) and 78-96 (ALAV…YAAS). Residues 93-382 (YAASRPRPVY…RFLATVVLKR (290 aa)) enclose the FAE domain. Catalysis depends on residues Cys237, His317, His401, His405, and Asn438.

It belongs to the thiolase-like superfamily. Chalcone/stilbene synthases family. As to expression, highly expressed in leaf sheaths. Expressed in leaves, flag leaves and panicles.

Its subcellular location is the membrane. The catalysed reaction is a very-long-chain acyl-CoA + malonyl-CoA + H(+) = a very-long-chain 3-oxoacyl-CoA + CO2 + CoA. Contributes to fatty acids elongation. Plays a role in controlling leaf anatomy and plant architecture. This chain is Probable 3-ketoacyl-CoA synthase 20, found in Oryza sativa subsp. japonica (Rice).